The sequence spans 280 residues: MASNQQSYKAGETRGKTQEKTGQAMGAMRDKAEEGKDKTSQTAQKAQQKAQETAQAAKDKTSQAAQTTQQKAQETAQAAKDKTSQAAQTTQQKAQETAQAAKDKTSQAAQTTQQKAHETTQSSKEKTSQAAQTAQEKARETKDKTGSYLSETGEAVKQKAQDAAQYTKETAQNAAQYTKETAEAGKDKTGGFLSQTGEHVKQMAMGAADAVKHTFGMATEEEDREHYPGTTTCTTQSTDPTRHTYEKEVRITGTIYEPSFFCFNNVMCLCFVISVVSLCL.

Disordered regions lie at residues 1-156 (MASN…GEAV) and 220-241 (EEED…TDPT). The span at 28 to 39 (MRDKAEEGKDKT) shows a compositional bias: basic and acidic residues. LEA 11-mer repeat repeat units follow at residues 31-41 (KAEEGKDKTSQ), 53-63 (TAQAAKDKTSQ), 75-85 (TAQAAKDKTSQ), 97-107 (TAQAAKDKTSQ), and 119-129 (TTQSSKEKTSQ). Residues 40–114 (SQTAQKAQQK…TSQAAQTTQQ (75 aa)) are compositionally biased toward low complexity. 2 stretches are compositionally biased toward basic and acidic residues: residues 115 to 127 (KAHE…KEKT) and 136 to 145 (EKARETKDKT). Residues 230 to 239 (TTTCTTQSTD) show a composition bias toward low complexity.

It belongs to the LEA type 4 family.

Its function is as follows. Lea proteins are late embryonic proteins abundant in higher plant seed embryos. This Brassica napus (Rape) protein is Late embryogenesis abundant protein 76.